The sequence spans 304 residues: Xylanase inhibitor protein 1 (304 aa).

An N-terminal signal peptide occupies residues 1–29; sequence MVALGRRSWLVPLAMVLAVSSCLAGPAMA. The GH18 domain occupies 34-304; sequence GQMTVFWGRN…GYGKTVKYWA (271 aa). Disulfide bonds link cysteine 53/cysteine 93 and cysteine 190/cysteine 219.

It belongs to the glycosyl hydrolase 18 family. Xylanase inhibitor subfamily. In terms of assembly, binds to fungal GH11 xylanases. As to expression, constitutively expressed in shoots.

Its subcellular location is the secreted. Its function is as follows. Fungal xylanase inhibitor. Possesses competitive inhibiting activity against fungal endo-1,4-beta-D-xylanases belonging to glycoside hydrolase family 11 (GH11). May function in plant defense against secreted fungal pathogen xylanases. Is similar to class III chitinases, but does not exhibit chitinase activity. The chain is Xylanase inhibitor protein 1 from Oryza sativa subsp. japonica (Rice).